Consider the following 208-residue polypeptide: Imidazoleglycerol-phosphate dehydratase (208 aa).

This sequence belongs to the imidazoleglycerol-phosphate dehydratase family.

Its subcellular location is the cytoplasm. It carries out the reaction D-erythro-1-(imidazol-4-yl)glycerol 3-phosphate = 3-(imidazol-4-yl)-2-oxopropyl phosphate + H2O. It participates in amino-acid biosynthesis; L-histidine biosynthesis; L-histidine from 5-phospho-alpha-D-ribose 1-diphosphate: step 6/9. The protein is Imidazoleglycerol-phosphate dehydratase of Symbiobacterium thermophilum (strain DSM 24528 / JCM 14929 / IAM 14863 / T).